A 651-amino-acid polypeptide reads, in one-letter code: Intraflagellar transport protein 70A (651 aa).

TPR repeat units lie at residues 8–41 (DGEY…HTKS), 42–75 (RAAL…HPEV), 140–173 (PDYD…LGYQ), 175–207 (DLAY…GIRE), 379–410 (VTKQ…EKYI), 411–443 (PVLM…CNEH), and 445–478 (TWKL…HYEN). The stretch at 494 to 521 (YIMTSQNEEAEELMRKIEKEEEQISYDD) forms a coiled coil. The TPR 8 repeat unit spans residues 530–563 (CIVNLVIGTLYCAKGNYDFGISRVIKSLEPYNKK).

The protein belongs to the TTC30/dfy-1/fleer family. As to expression, localizes to the cilia of many ciliated epithelial cell types including pronephric cells, olfactory placode, the brain ventricle and lateral line organs.

It localises to the cell projection. It is found in the cilium. In terms of biological role, plays a role in anterograde intraflagellar transport (IFT), the process by which cilia precursors are transported from the base of the cilium to the site of their incorporation at the tip. Required for polyglutamylation of axonemal tubulin, which is a prerequisite for correct assembly of cilia and for normal cilia beat amplitude. Does not seem to be required for neuronal microtubule polyglutamylation. This chain is Intraflagellar transport protein 70A (ift70a), found in Danio rerio (Zebrafish).